Consider the following 1707-residue polypeptide: Kinesin-like protein KIF1A (1707 aa).

In terms of domain architecture, Kinesin motor spans 5-354 (SVKVAVRVRP…LRYADRAKQI (350 aa)). The ATP site is built by G102, K103, S104, Y105, and S215. S104 is a binding site for Mg(2+). The stretch at 439 to 466 (SEEAIERLKETEKIIAELNETWEEKLRR) forms a coiled coil. One can recognise an FHA domain in the interval 525 to 581 (TRVGREDAERRQDIVLSGHFIKEEHCIFRSDSRGGGEAVVTLEPCEGADTYVNGKKV). Coiled coils occupy residues 637-671 (EKQG…LLEQ) and 811-831 (LEKL…AAEV). The interval 657–1105 (QYRREREEAT…LCKDVLSPLR (449 aa)) is required for interaction with CALM1, PPFIA2 and TANC2. 2 disordered regions span residues 1424 to 1462 (PVPE…EVPN) and 1536 to 1576 (TDVR…EKEP). The segment covering 1429–1453 (LSPASSEDSESRSSSGASSPLSAEG) has biased composition (low complexity). The PH domain maps to 1592-1690 (IVSKKGYLHF…WLYAFNPLLA (99 aa)).

Belongs to the TRAFAC class myosin-kinesin ATPase superfamily. Kinesin family. Unc-104 subfamily. Dimeric motor; dimerization is required for ATP-driven processive motility. Monomer in vitro. Interacts with PPFIA1 and PPFIA4. Interacts with CALM1; the interaction is increased in presence of calcium and increases neuronal dense core vesicles motility. Interacts with PPFIA2 and TANC2; both interactions allow the recruitment of neuronal dense core vesicles to dendritic spines and decrease in presence of calcium. Interacts with SYT4 (unphosphorylated) and SYT11; both interactions increase in presence of calcium. Interacts with MADD.

The protein localises to the cytoplasm. It is found in the cytoskeleton. It localises to the cell projection. Its subcellular location is the neuron projection. The protein resides in the axon. The protein localises to the perinuclear region. It is found in the synapse. It localises to the cytoplasmic vesicle. Its subcellular location is the secretory vesicle. The protein resides in the neuronal dense core vesicle membrane. It catalyses the reaction ATP + H2O + a kinesin associated with a microtubule at position (n) = ADP + phosphate a kinesin associated with a microtubule at position (n+1, toward the plus end).. Functionally, kinesin motor with a plus-end-directed microtubule motor activity, involved in anterograde axonal transport of synaptic vesicle precursors. Also required for neuronal dense core vesicles (DCVs) transport to the dendritic spines and axons. The interaction calcium-dependent with CALM1 increases vesicle motility and interaction with the scaffolding proteins PPFIA2 and TANC2 recruits DCVs to synaptic sites. The chain is Kinesin-like protein KIF1A from Rattus norvegicus (Rat).